The sequence spans 510 residues: E3 ubiquitin-protein ligase TRIM7 (510 aa).

Residues 29 to 81 (CSICLEFFREPVSVECGHSFCRACIMRCWERPGAGTGTATRTLPCPLPCPQCR) form an RING-type zinc finger. Position 106 is a phosphoserine; by RPS6KA5 (S106). The segment at 124-165 (AAAARCSQHGEQLKLYCQDDGRAICVVCDRAREHRSHAVLPL) adopts a B box-type zinc-finger fold. C129, H132, C151, and H157 together coordinate Zn(2+). A coiled-coil region spans residues 165 to 275 (LEEAVQEAKE…SGQIQETAQK (111 aa)). In terms of domain architecture, B30.2/SPRY spans 323-510 (LLKKFKEDLQ…STGTYLRIWP (188 aa)).

This sequence belongs to the TRIM/RBCC family. In terms of assembly, forms homodimers. Interacts with GNIP2. Interacts with GYG1. Interacts with RNF187 (via C-terminus). Post-translationally, phosphorylated at Ser-106 by RPS6KA5/MSK1, which stimulates the ubiquitin ligase activity. Auto-ubiquitinates via 'Lys-63'-linked polyubiquitination. As to expression, highly expressed in antigen-presenting cells.

It is found in the nucleus. The protein localises to the cytoplasm. Its subcellular location is the golgi apparatus. It carries out the reaction S-ubiquitinyl-[E2 ubiquitin-conjugating enzyme]-L-cysteine + [acceptor protein]-L-lysine = [E2 ubiquitin-conjugating enzyme]-L-cysteine + N(6)-ubiquitinyl-[acceptor protein]-L-lysine.. It functions in the pathway protein modification; protein ubiquitination. Its function is as follows. E3 ubiquitin-protein ligase that have both tumor-promoting and tumor-suppressing activities and functions in several biological processes including innate immunity, regulation of ferroptosis as well as cell proliferation and migration. Acts as an antiviral effector against multiple viruses by targeting specific viral proteins for ubiquitination and degradation including norovirus NTPase protein. Mechanistically, recognizes the C-terminal glutamine-containing motif generated by viral proteases that process the polyproteins and trigger their ubiquitination and subsequent degradation. Mediates 'Lys-63'-linked polyubiquitination and stabilization of the JUN coactivator RNF187 in response to growth factor signaling via the MEK/ERK pathway, thereby regulating JUN transactivation and cellular proliferation. Promotes the TLR4-mediated signaling activation through its E3 ligase domain leading to production of pro-inflammatory cytokines and type I interferon. Also plays a negative role in the regulation of exogenous cytosolic DNA virus-triggered immune response. Mechanistically, enhances the 'Lys-48'-linked ubiquitination of STING1 leading to its proteasome-dependent degradation. Mediates the ubiquitination of the SIN3-HDAC chromatin remodeling complex component BRMS1. Modulates NCOA4-mediated ferritinophagy and ferroptosis in glioblastoma cells by ubiquitinating NCOA4, leading to its degradation. The protein is E3 ubiquitin-protein ligase TRIM7 (Trim7) of Mus musculus (Mouse).